A 372-amino-acid chain; its full sequence is MNLSSLPFRLLAAAVALCAIAAPASAERIKDLAQVGGVRGNALVGYGLVVGLDGSGDRTSQAPFTVQSLKNLLGELGVNVPANVNPQLKNVAAVAIHAELPPFAKPGQPIDVTVSSIANAVSLRGGSLLMAPLKGADGQVYAMAQGNLVVGGFGAQGKDGSRVSVNVPSVGRIPNGATVERALPDVFAGTGEITLNLHQNDFTTVSRMVAAIDSSFGAGTARAVDGVTVAVRSPTDPGARIGLLSRLENVELSPGDAPAKVVVNARTGTVVIGQLVRVMPAAIAHGSLTVTISENTNVSQPGAFSGGRTAVTQQSTITATSEGSRMFKFEGGTTLDQIVRAVNEVGAAPGDLVAILEALKQAGALTAELEVI.

The first 26 residues, 1 to 26 (MNLSSLPFRLLAAAVALCAIAAPASA), serve as a signal peptide directing secretion.

Belongs to the FlgI family. In terms of assembly, the basal body constitutes a major portion of the flagellar organelle and consists of four rings (L,P,S, and M) mounted on a central rod.

It localises to the periplasm. It is found in the bacterial flagellum basal body. Assembles around the rod to form the L-ring and probably protects the motor/basal body from shearing forces during rotation. The polypeptide is Flagellar P-ring protein (Xanthomonas axonopodis pv. citri (strain 306)).